The primary structure comprises 251 residues: Ubiquinone/menaquinone biosynthesis C-methyltransferase UbiE (251 aa).

S-adenosyl-L-methionine contacts are provided by residues Thr-74, Asp-95, and 123–124; that span reads NA.

Belongs to the class I-like SAM-binding methyltransferase superfamily. MenG/UbiE family.

It carries out the reaction a 2-demethylmenaquinol + S-adenosyl-L-methionine = a menaquinol + S-adenosyl-L-homocysteine + H(+). The enzyme catalyses a 2-methoxy-6-(all-trans-polyprenyl)benzene-1,4-diol + S-adenosyl-L-methionine = a 5-methoxy-2-methyl-3-(all-trans-polyprenyl)benzene-1,4-diol + S-adenosyl-L-homocysteine + H(+). Its pathway is quinol/quinone metabolism; menaquinone biosynthesis; menaquinol from 1,4-dihydroxy-2-naphthoate: step 2/2. The protein operates within cofactor biosynthesis; ubiquinone biosynthesis. In terms of biological role, methyltransferase required for the conversion of demethylmenaquinol (DMKH2) to menaquinol (MKH2) and the conversion of 2-polyprenyl-6-methoxy-1,4-benzoquinol (DDMQH2) to 2-polyprenyl-3-methyl-6-methoxy-1,4-benzoquinol (DMQH2). In Shewanella sp. (strain ANA-3), this protein is Ubiquinone/menaquinone biosynthesis C-methyltransferase UbiE.